The following is a 387-amino-acid chain: 8-amino-7-oxononanoate synthase (387 aa).

Arg-19 is a binding site for substrate. A pyridoxal 5'-phosphate-binding site is contributed by 106–107; it reads GY. His-131 contributes to the substrate binding site. Pyridoxal 5'-phosphate contacts are provided by Ser-177, His-205, and Thr-234. Residue Lys-237 is modified to N6-(pyridoxal phosphate)lysine. Thr-351 contributes to the substrate binding site.

This sequence belongs to the class-II pyridoxal-phosphate-dependent aminotransferase family. BioF subfamily. As to quaternary structure, homodimer. The cofactor is pyridoxal 5'-phosphate.

It catalyses the reaction 6-carboxyhexanoyl-[ACP] + L-alanine + H(+) = (8S)-8-amino-7-oxononanoate + holo-[ACP] + CO2. It participates in cofactor biosynthesis; biotin biosynthesis. Catalyzes the decarboxylative condensation of pimeloyl-[acyl-carrier protein] and L-alanine to produce 8-amino-7-oxononanoate (AON), [acyl-carrier protein], and carbon dioxide. This chain is 8-amino-7-oxononanoate synthase, found in Methylococcus capsulatus (strain ATCC 33009 / NCIMB 11132 / Bath).